A 324-amino-acid chain; its full sequence is Melanoma-associated antigen B16 (324 aa).

Positions 1 to 15 (MSQDQESPRCTHDQH) are enriched in basic and acidic residues. Disordered stretches follow at residues 1–22 (MSQD…FSET) and 39–108 (LSSS…PRNV). Low complexity predominate over residues 70–81 (SSSIAVTTTSSS). Over residues 82–95 (ESDEASSNQEEEDS) the composition is skewed to acidic residues. The region spanning 113 to 312 (LDQKVAFLVN…HSFPSQYAEA (200 aa)) is the MAGE domain.

This Homo sapiens (Human) protein is Melanoma-associated antigen B16 (MAGEB16).